The following is a 237-amino-acid chain: Urease subunit alpha (237 aa).

The interval 1-102 (MKLTPKELDK…LVTIHTPVED (102 aa)) is urease gamma. Residues 103–237 (NGKLAPGEVF…CGCEATKDKQ (135 aa)) are urease beta.

This sequence in the N-terminal section; belongs to the urease gamma subunit family. The protein in the C-terminal section; belongs to the urease beta subunit family. As to quaternary structure, heterohexamer of 3 UreA (alpha) and 3 UreB (beta) subunits.

The protein resides in the cytoplasm. It catalyses the reaction urea + 2 H2O + H(+) = hydrogencarbonate + 2 NH4(+). It functions in the pathway nitrogen metabolism; urea degradation; CO(2) and NH(3) from urea (urease route): step 1/1. This chain is Urease subunit alpha, found in Helicobacter felis.